We begin with the raw amino-acid sequence, 286 residues long: Mitochondrial dicarboxylate carrier (286 aa).

3 Solcar repeats span residues Ser7–Tyr87, Ser100–Leu187, and Asp196–His279. Helical transmembrane passes span Trp9–Leu29, Gly62–Tyr81, and Val102–Val122. Lys158 carries the N6-acetyllysine modification. A run of 3 helical transmembrane segments spans residues Gly162 to Tyr181, Phe202 to Leu222, and Gly254 to Glu274.

The protein belongs to the mitochondrial carrier (TC 2.A.29) family. In terms of tissue distribution, expressed most strongly in liver, then kidney, and at lower levels in heart and brain.

Its subcellular location is the mitochondrion inner membrane. The enzyme catalyses (S)-malate(in) + phosphate(out) = (S)-malate(out) + phosphate(in). It catalyses the reaction malonate(out) + (S)-malate(in) = malonate(in) + (S)-malate(out). It carries out the reaction (S)-malate(in) + succinate(out) = (S)-malate(out) + succinate(in). The catalysed reaction is (S)-malate(in) + sulfate(out) = (S)-malate(out) + sulfate(in). The enzyme catalyses malonate(out) + phosphate(in) = malonate(in) + phosphate(out). It catalyses the reaction succinate(out) + phosphate(in) = succinate(in) + phosphate(out). It carries out the reaction sulfate(out) + phosphate(in) = sulfate(in) + phosphate(out). The catalysed reaction is malonate(out) + succinate(in) = malonate(in) + succinate(out). Its function is as follows. Catalyzes the electroneutral exchange or flux of physiologically important metabolites such as dicarboxylates (malonate, malate, succinate), inorganic sulfur-containing anions, and phosphate, across mitochondrial inner membrane. Plays an important role in gluconeogenesis, fatty acid metabolism, urea synthesis, and sulfur metabolism, particularly in liver, by supplying the substrates for the different metabolic processes. Regulates fatty acid release from adipocytes, and contributes to systemic insulin sensitivity. This chain is Mitochondrial dicarboxylate carrier, found in Rattus norvegicus (Rat).